The primary structure comprises 229 residues: Peptidase E (229 aa).

Active-site charge relay system residues include serine 120, aspartate 135, and histidine 157.

Belongs to the peptidase S51 family.

It localises to the cytoplasm. It catalyses the reaction Dipeptidase E catalyzes the hydrolysis of dipeptides Asp-|-Xaa. It does not act on peptides with N-terminal Glu, Asn or Gln, nor does it cleave isoaspartyl peptides.. In terms of biological role, hydrolyzes dipeptides containing N-terminal aspartate residues. May play a role in allowing the cell to use peptide aspartate to spare carbon otherwise required for the synthesis of the aspartate family of amino acids. The polypeptide is Peptidase E (Shigella sonnei (strain Ss046)).